The following is a 264-amino-acid chain: S-adenosylmethionine decarboxylase proenzyme (264 aa).

Residue S112 is the Schiff-base intermediate with substrate; via pyruvic acid of the active site. Position 112 is a pyruvic acid (Ser); by autocatalysis (S112). Catalysis depends on H117, which acts as the Proton acceptor; for processing activity. The active-site Proton donor; for catalytic activity is the C140.

The protein belongs to the prokaryotic AdoMetDC family. Type 2 subfamily. As to quaternary structure, heterooctamer of four alpha and four beta chains arranged as a tetramer of alpha/beta heterodimers. The cofactor is pyruvate. In terms of processing, is synthesized initially as an inactive proenzyme. Formation of the active enzyme involves a self-maturation process in which the active site pyruvoyl group is generated from an internal serine residue via an autocatalytic post-translational modification. Two non-identical subunits are generated from the proenzyme in this reaction, and the pyruvate is formed at the N-terminus of the alpha chain, which is derived from the carboxyl end of the proenzyme. The post-translation cleavage follows an unusual pathway, termed non-hydrolytic serinolysis, in which the side chain hydroxyl group of the serine supplies its oxygen atom to form the C-terminus of the beta chain, while the remainder of the serine residue undergoes an oxidative deamination to produce ammonia and the pyruvoyl group blocking the N-terminus of the alpha chain.

It carries out the reaction S-adenosyl-L-methionine + H(+) = S-adenosyl 3-(methylsulfanyl)propylamine + CO2. The protein operates within amine and polyamine biosynthesis; S-adenosylmethioninamine biosynthesis; S-adenosylmethioninamine from S-adenosyl-L-methionine: step 1/1. Catalyzes the decarboxylation of S-adenosylmethionine to S-adenosylmethioninamine (dcAdoMet), the propylamine donor required for the synthesis of the polyamines spermine and spermidine from the diamine putrescine. The polypeptide is S-adenosylmethionine decarboxylase proenzyme (Shigella boydii serotype 4 (strain Sb227)).